Consider the following 426-residue polypeptide: Dihydroorotase (426 aa).

The Zn(2+) site is built by His-59 and His-61. Substrate is bound by residues 61 to 63 (HLR) and Asn-93. Residues Asp-151, His-178, and His-232 each coordinate Zn(2+). A substrate-binding site is contributed by Asn-279. Asp-306 provides a ligand contact to Zn(2+). Asp-306 is a catalytic residue. Residues His-310 and 324–325 (FG) each bind substrate.

The protein belongs to the metallo-dependent hydrolases superfamily. DHOase family. Class I DHOase subfamily. The cofactor is Zn(2+).

It catalyses the reaction (S)-dihydroorotate + H2O = N-carbamoyl-L-aspartate + H(+). The protein operates within pyrimidine metabolism; UMP biosynthesis via de novo pathway; (S)-dihydroorotate from bicarbonate: step 3/3. Its function is as follows. Catalyzes the reversible cyclization of carbamoyl aspartate to dihydroorotate. The sequence is that of Dihydroorotase from Brevibacillus brevis (strain 47 / JCM 6285 / NBRC 100599).